A 123-amino-acid chain; its full sequence is NADH-quinone oxidoreductase subunit A (123 aa).

3 helical membrane-spanning segments follow: residues 11 to 31, 68 to 88, and 93 to 113; these read YLPI…IMIL, LVAI…PWAI, and IGKI…IGFI.

This sequence belongs to the complex I subunit 3 family. As to quaternary structure, NDH-1 is composed of 14 different subunits. Subunits NuoA, H, J, K, L, M, N constitute the membrane sector of the complex.

The protein resides in the cell inner membrane. The catalysed reaction is a quinone + NADH + 5 H(+)(in) = a quinol + NAD(+) + 4 H(+)(out). In terms of biological role, NDH-1 shuttles electrons from NADH, via FMN and iron-sulfur (Fe-S) centers, to quinones in the respiratory chain. The immediate electron acceptor for the enzyme in this species is believed to be ubiquinone. Couples the redox reaction to proton translocation (for every two electrons transferred, four hydrogen ions are translocated across the cytoplasmic membrane), and thus conserves the redox energy in a proton gradient. In Rickettsia felis (strain ATCC VR-1525 / URRWXCal2) (Rickettsia azadi), this protein is NADH-quinone oxidoreductase subunit A.